We begin with the raw amino-acid sequence, 202 residues long: Protein DCV1 (202 aa).

A signal peptide spans 1–18 (MLNYKLILLFSSFLQLIS). 3 consecutive transmembrane segments (helical) span residues 91 to 107 (IGGL…LTFI), 137 to 155 (ILTL…LLCM), and 168 to 189 (LVWL…FLSF).

The protein resides in the membrane. This Saccharomyces cerevisiae (strain ATCC 204508 / S288c) (Baker's yeast) protein is Protein DCV1 (DCV1).